We begin with the raw amino-acid sequence, 158 residues long: Small ribosomal subunit protein uS15 (158 aa).

A compositionally biased stretch (basic residues) spans 1 to 18 (MARMHARKRGKSGSKRPP). The interval 1-21 (MARMHARKRGKSGSKRPPRTA) is disordered.

This sequence belongs to the universal ribosomal protein uS15 family. Part of the 30S ribosomal subunit.

This is Small ribosomal subunit protein uS15 from Pyrococcus horikoshii (strain ATCC 700860 / DSM 12428 / JCM 9974 / NBRC 100139 / OT-3).